Here is a 209-residue protein sequence, read N- to C-terminus: Ribosomal RNA large subunit methyltransferase E (209 aa).

The S-adenosyl-L-methionine site is built by Gly63, Trp65, Asp83, Asp99, and Asp124. Residue Lys164 is the Proton acceptor of the active site.

Belongs to the class I-like SAM-binding methyltransferase superfamily. RNA methyltransferase RlmE family.

It is found in the cytoplasm. It catalyses the reaction uridine(2552) in 23S rRNA + S-adenosyl-L-methionine = 2'-O-methyluridine(2552) in 23S rRNA + S-adenosyl-L-homocysteine + H(+). In terms of biological role, specifically methylates the uridine in position 2552 of 23S rRNA at the 2'-O position of the ribose in the fully assembled 50S ribosomal subunit. The chain is Ribosomal RNA large subunit methyltransferase E from Serratia proteamaculans (strain 568).